A 351-amino-acid polypeptide reads, in one-letter code: 2-Hydroxyacid oxidase 2 (351 aa).

Positions 2–351 constitute an FMN hydroxy acid dehydrogenase domain; that stretch reads SLVCLTDFQA…NRNLVQFSRL (350 aa). Residues 77 to 79, serine 106, and glutamine 128 each bind FMN; that span reads PTG. Tyrosine 130 serves as a coordination point for a 2-oxocarboxylate. Threonine 156 lines the FMN pocket. Position 165 (arginine 165) interacts with a 2-oxocarboxylate. Residue threonine 178 is modified to Phosphothreonine. Lysine 222 provides a ligand contact to FMN. The Proton acceptor role is filled by histidine 246. Position 249 (arginine 249) interacts with a 2-oxocarboxylate. FMN contacts are provided by residues 277–281 and 300–301; these read DGGVR and GR. The Microbody targeting signal motif lies at 349 to 351; it reads SRL.

This sequence belongs to the FMN-dependent alpha-hydroxy acid dehydrogenase family. In terms of assembly, homotetramer. Requires FMN as cofactor. Expressed in the liver and kidney.

It localises to the peroxisome. The catalysed reaction is a (2S)-2-hydroxycarboxylate + O2 = a 2-oxocarboxylate + H2O2. It catalyses the reaction 2-hydroxyhexadecanoate + O2 = 2-oxohexadecanoate + H2O2. It carries out the reaction 2-hydroxyoctanoate + O2 = 2-oxooctanoate + H2O2. Its pathway is lipid metabolism; fatty acid metabolism. Oxidase that catalyzes the oxidation of medium and long chain hydroxyacids such as 2-hydroxyhexadecanoate and 2-hydroxyoctanoate, to the correspondong 2-oxoacids. Its role in the oxidation of 2-hydroxy fatty acids may contribute to the general pathway of fatty acid alpha-oxidation. Active in vitro with the artificial electron acceptor 2,6-dichlorophenolindophenol (DCIP), but O2 is believed to be the physiological electron acceptor, leading to the production of H2O2. Is not active on glycolate, glyoxylate, L-lactate and 2-hydroxybutanoate. This is 2-Hydroxyacid oxidase 2 (HAO2) from Homo sapiens (Human).